We begin with the raw amino-acid sequence, 215 residues long: Adenylate kinase (215 aa).

10-15 (GAGKGT) contributes to the ATP binding site. An NMP region spans residues 30-59 (STGDMLRAAVKAGSPLGQQVKGVMDSGGLV). AMP is bound by residues Thr31, Arg36, 57–59 (GLV), 85–88 (GFPR), and Gln92. Positions 122-159 (GRRVHPASGRVYHTEHNPPKVAGKDDVTGEELIQREDD) are LID. Residues Arg123 and 132–133 (VY) contribute to the ATP site. Arg156 and Arg167 together coordinate AMP. Residue Gly201 participates in ATP binding.

This sequence belongs to the adenylate kinase family. As to quaternary structure, monomer.

Its subcellular location is the cytoplasm. The enzyme catalyses AMP + ATP = 2 ADP. Its pathway is purine metabolism; AMP biosynthesis via salvage pathway; AMP from ADP: step 1/1. Its function is as follows. Catalyzes the reversible transfer of the terminal phosphate group between ATP and AMP. Plays an important role in cellular energy homeostasis and in adenine nucleotide metabolism. This chain is Adenylate kinase, found in Pseudomonas aeruginosa (strain LESB58).